Consider the following 118-residue polypeptide: NADH-ubiquinone oxidoreductase chain 3 (118 aa).

A run of 3 helical transmembrane segments spans residues 7–27, 62–82, and 87–107; these read ICISLVISLLLSLILLVVPFL, LVSILFIIFDLEVTFFFPWAV, and IDLFGFWSMMAFLLILTIGFL.

This sequence belongs to the complex I subunit 3 family.

Its subcellular location is the mitochondrion membrane. The catalysed reaction is a ubiquinone + NADH + 5 H(+)(in) = a ubiquinol + NAD(+) + 4 H(+)(out). Its function is as follows. Core subunit of the mitochondrial membrane respiratory chain NADH dehydrogenase (Complex I) that is believed to belong to the minimal assembly required for catalysis. Complex I functions in the transfer of electrons from NADH to the respiratory chain. The immediate electron acceptor for the enzyme is believed to be ubiquinone. The chain is NADH-ubiquinone oxidoreductase chain 3 (ND3) from Oenothera berteroana (Bertero's evening primrose).